The chain runs to 914 residues: Solute carrier family 12 member 9 (914 aa).

The Cytoplasmic portion of the chain corresponds to 1–36 (MASENSPLLAYRLLGEEGAAFPPNGAGGSGVASARK). The residue at position 6 (serine 6) is a Phosphoserine. The helical transmembrane segment at 37 to 57 (LSTFLGVVVPTVLSMFSIVVF) threads the bilayer. Residues 58–72 (LRIGFVVGHAGLLQA) lie on the Extracellular side of the membrane. Residues 73 to 93 (LAMLLVAYVILALTVLSVCAI) traverse the membrane as a helical segment. Residues 94 to 119 (ATNGAVRGGGAYFMISRTLGPEVGGS) are Cytoplasmic-facing. Residues 120–140 (IGLMFYLANVCGCAVSLLGLV) traverse the membrane as a helical segment. Topologically, residues 141-167 (ESILDVFGADVTGSSGIKVLPQGYGWN) are extracellular. A helical membrane pass occupies residues 168 to 188 (LLYGSLLLGLVGGVCALGAGL). The Cytoplasmic segment spans residues 189 to 193 (YARAS). The helical transmembrane segment at 194-214 (FLTFLLVSGSLASVLVSFVAV) threads the bilayer. Topologically, residues 215–262 (GPRNITLAPRPGTNGSSVPPRHGHFTGFNGSTLKDNLGAGYAEDYTTG) are extracellular. Residues asparagine 218, asparagine 228, and asparagine 243 are each glycosylated (N-linked (GlcNAc...) asparagine). Residues 263–283 (AMMTFASVFAVLFNGCTGIMA) traverse the membrane as a helical segment. Residues 284-297 (GANMSGELKDPSRA) lie on the Cytoplasmic side of the membrane. Residues 298 to 318 (IPLGTIIAVAYTFFIYILLFF) traverse the membrane as a helical segment. At 319–338 (LSSFTCDRALLQGDYGFFRD) the chain is on the extracellular side. The helical transmembrane segment at 339–359 (ISLWPPLVLIGIYATALSASM) threads the bilayer. Topologically, residues 360–376 (SSLIGASRILHALAQDD) are cytoplasmic. The helical transmembrane segment at 377 to 399 (LFGVILAPAKVVSGGGNPWGAVL) threads the bilayer. Topologically, residues 400–416 (YSWGLVQLVLLAGKLNT) are extracellular. The helical transmembrane segment at 417–437 (LAAVVTVFYLVAYAAVDLSCL) threads the bilayer. Residues 438-466 (SLEWASAPNFRPTFSLFSWHTCLLGVASC) are Cytoplasmic-facing. Residues 467 to 487 (LLMMFLISPGAAGGSLLLMGL) traverse the membrane as a helical segment. Residues 488–740 (LSALLTARGG…LLRPRGGPGY (253 aa)) are Extracellular-facing. A disordered region spans residues 645–678 (PAFSEPAEGTREGGSPALSTLFPPPRAPGSPRAL). Residues 741–761 (VDVCGLFLLQMATILSMVPAW) traverse the membrane as a helical segment. Residues 762 to 914 (HSARLRIFLC…GVTPVTCTDL (153 aa)) lie on the Cytoplasmic side of the membrane. The tract at residues 843-864 (QQGRGTGGGPGGPEGRDGEEGP) is disordered. The segment covering 846–855 (RGTGGGPGGP) has biased composition (gly residues).

Belongs to the SLC12A transporter family. As to quaternary structure, interacts with SLC12A1.

It is found in the cell membrane. The protein resides in the lysosome membrane. May be an inhibitor of SLC12A1. Seems to correspond to a subunit of a multimeric transport system and thus, additional subunits may be required for its function. May play a role in lysosomal ion flux and osmoregulation. This is Solute carrier family 12 member 9 (Slc12a9) from Rattus norvegicus (Rat).